The chain runs to 500 residues: NAD(P)H-quinone oxidoreductase chain 4, chloroplastic (500 aa).

A run of 14 helical transmembrane segments spans residues 4 to 24 (FPWLTIFVGLPISAGFLIFVF), 35 to 55 (YTIFICVLELLLMTYAFSYYF), 84 to 104 (GLSLGPILLTGFITTLATLAA), 113 to 133 (LFHFLMLAMYSGQIGLFSSQN), 134 to 154 (LLLFFIMWELELIPVYLLLAM), 167 to 187 (FILYTAGSSVFLLMGALGIAF), 211 to 231 (ILFYIGFLIAFAVKSPIIPLH), 242 to 262 (HYSTCMLLAGILLKMGAYGLV), 272 to 292 (AHSIFSSWLIIVGAIQIIYAA), 305 to 325 (IAYSSVSHMGFTIIGICSISD), 330 to 350 (GAILQIISHGFIGAALFFLSG), 386 to 406 (LALPGMSGFFAELVVFFGIIT), 416 to 436 (ILITFVTAVGTILTPIYLLSM), and 463 to 483 (FVSIAILLPVISIGIYPDFVF).

It belongs to the complex I subunit 4 family.

The protein localises to the plastid. It localises to the chloroplast thylakoid membrane. It catalyses the reaction a plastoquinone + NADH + (n+1) H(+)(in) = a plastoquinol + NAD(+) + n H(+)(out). It carries out the reaction a plastoquinone + NADPH + (n+1) H(+)(in) = a plastoquinol + NADP(+) + n H(+)(out). The polypeptide is NAD(P)H-quinone oxidoreductase chain 4, chloroplastic (Populus trichocarpa (Western balsam poplar)).